The primary structure comprises 286 residues: Orotidine 5'-phosphate decarboxylase (286 aa).

Substrate-binding positions include D35, 57–59, 89–98, Y239, and R257; these read KTH and DRKFADIGNT. The active-site Proton donor is K91.

This sequence belongs to the OMP decarboxylase family.

It catalyses the reaction orotidine 5'-phosphate + H(+) = UMP + CO2. It functions in the pathway pyrimidine metabolism; UMP biosynthesis via de novo pathway; UMP from orotate: step 2/2. The sequence is that of Orotidine 5'-phosphate decarboxylase (URA3) from Yarrowia lipolytica (strain CLIB 122 / E 150) (Yeast).